The following is a 399-amino-acid chain: MRTIDDLGELRGKTVLVRSDFNVPLDGTTITDDGRIRAALPTLKRLVDAGAKVVVTAHLGRPKGAPDPAFSLAPVAQRLGALLGTPVALAADVVGPSAHETVAALSDGDVALLENVRFDPRESSKDDAERLELARAFAELADAFVSDGFGVVHRKQASVYDVATLLPHAAGDLVLAEVTALRKATDDPERPYAVVLGGSKVSDKLGVIANLLTKADTLLIGGGMVFTFLAAQGHQVGKSLLEEDQIDTVKGYLDQAEQSGVTIVLPTDIVAAEAFAADAPHQVVAADAIPADSIGLDIGPESGEAFAAVIRGAKTVVWNGPMGVFEFDAFAAGTRAVAQGLTDATAAGAFTIVGGGDSAAAVRSLGFDEAGFSHISTGGGASLEFLEGKTLPGLAVLED.

Substrate-binding positions include 20-22 (DFN), arginine 35, 58-61 (HLGR), arginine 117, and arginine 154. ATP contacts are provided by residues lysine 204, glycine 295, glutamate 326, and 355–358 (GGDS).

It belongs to the phosphoglycerate kinase family. In terms of assembly, monomer.

Its subcellular location is the cytoplasm. It carries out the reaction (2R)-3-phosphoglycerate + ATP = (2R)-3-phospho-glyceroyl phosphate + ADP. It participates in carbohydrate degradation; glycolysis; pyruvate from D-glyceraldehyde 3-phosphate: step 2/5. This is Phosphoglycerate kinase from Beutenbergia cavernae (strain ATCC BAA-8 / DSM 12333 / CCUG 43141 / JCM 11478 / NBRC 16432 / NCIMB 13614 / HKI 0122).